We begin with the raw amino-acid sequence, 135 residues long: Cytochrome b5 (135 aa).

The 77-residue stretch at 4 to 80 (SKVYSLAEVS…MDEMCVGDID (77 aa)) folds into the Cytochrome b5 heme-binding domain. The heme site is built by histidine 39 and histidine 63. Residues 106–126 (FIIKLLQFLVPLIILGVAVGI) traverse the membrane as a helical segment.

It belongs to the cytochrome b5 family.

Its subcellular location is the endoplasmic reticulum membrane. The protein localises to the microsome membrane. Functionally, membrane bound hemoprotein which function as an electron carrier for several membrane bound oxygenases. The chain is Cytochrome b5 from Cuscuta reflexa (Southern Asian dodder).